Here is a 343-residue protein sequence, read N- to C-terminus: NADH-quinone oxidoreductase subunit H (343 aa).

The next 8 membrane-spanning stretches (helical) occupy residues Trp-21–Val-41, Phe-95–Phe-115, Val-124–Leu-144, Met-172–Val-192, Gly-197–Ala-217, Ile-257–Glu-277, Phe-281–Trp-301, and Leu-317–Met-337.

The protein belongs to the complex I subunit 1 family. As to quaternary structure, NDH-1 is composed of 14 different subunits. Subunits NuoA, H, J, K, L, M, N constitute the membrane sector of the complex.

It localises to the cell inner membrane. It catalyses the reaction a quinone + NADH + 5 H(+)(in) = a quinol + NAD(+) + 4 H(+)(out). Functionally, NDH-1 shuttles electrons from NADH, via FMN and iron-sulfur (Fe-S) centers, to quinones in the respiratory chain. The immediate electron acceptor for the enzyme in this species is believed to be ubiquinone. Couples the redox reaction to proton translocation (for every two electrons transferred, four hydrogen ions are translocated across the cytoplasmic membrane), and thus conserves the redox energy in a proton gradient. This subunit may bind ubiquinone. In Magnetococcus marinus (strain ATCC BAA-1437 / JCM 17883 / MC-1), this protein is NADH-quinone oxidoreductase subunit H.